The chain runs to 238 residues: 1-(5-phosphoribosyl)-5-[(5-phosphoribosylamino)methylideneamino] imidazole-4-carboxamide isomerase (238 aa).

Catalysis depends on aspartate 8, which acts as the Proton acceptor. The Proton donor role is filled by aspartate 130.

The protein belongs to the HisA/HisF family.

Its subcellular location is the cytoplasm. The enzyme catalyses 1-(5-phospho-beta-D-ribosyl)-5-[(5-phospho-beta-D-ribosylamino)methylideneamino]imidazole-4-carboxamide = 5-[(5-phospho-1-deoxy-D-ribulos-1-ylimino)methylamino]-1-(5-phospho-beta-D-ribosyl)imidazole-4-carboxamide. It participates in amino-acid biosynthesis; L-histidine biosynthesis; L-histidine from 5-phospho-alpha-D-ribose 1-diphosphate: step 4/9. The sequence is that of 1-(5-phosphoribosyl)-5-[(5-phosphoribosylamino)methylideneamino] imidazole-4-carboxamide isomerase from Methanococcus maripaludis (strain C6 / ATCC BAA-1332).